The chain runs to 203 residues: Snake venom metalloproteinase atroxase (203 aa).

Glu1 is subject to Pyrrolidone carboxylic acid (Glu). N-linked (GlcNAc...) asparagine glycosylation is present at Asn5. The region spanning 9 to 203 (RYIELVVVAD…KQYNPQIXNK (195 aa)) is the Peptidase M12B domain. Ca(2+)-binding residues include Glu12 and Asp96. His145 contacts Zn(2+). The active site involves Glu146. His149 and His155 together coordinate Zn(2+). An intrachain disulfide couples Cys160 to Cys167. Position 202 (Asn202) interacts with Ca(2+).

This sequence belongs to the venom metalloproteinase (M12B) family. P-I subfamily. Monomer. It depends on Zn(2+) as a cofactor. Post-translationally, the N-terminus is blocked. Expressed by the venom gland.

Its subcellular location is the secreted. The catalysed reaction is Cleavage of 5-His-|-Leu-6, 9-Ser-|-His-10, 10-His-|-Leu-11, 14-Ala-|-Leu-15 and 16-Tyr-|-Leu-17 in insulin B chain.. Its activity is regulated as follows. Inhibited by EDTA and alpha2-macroglobulin. Its function is as follows. Snake venom zinc metalloprotease that has Aalpha, Bbeta fibrin(ogen)olytic activities. It cleaves the Aalpha chain of fibrinogen first followed by the Bbeta chain and shows no effect on the gamma chain. Does not induce or inhibit platelet aggregation, and is unable to activate plasminogen. Exhibits low lethality when tested on mice. Intravenous administration results in thrombolysis within one hour followed by recanalization. Fibrinogenolytic activity results in a 60% decrease in the rat's plasma fibrinogen level. Histological examination of kidney, liver, heart and lung tissue shows no necrosis nor hemorrhage. The chain is Snake venom metalloproteinase atroxase from Crotalus atrox (Western diamondback rattlesnake).